The following is a 158-amino-acid chain: Ribosome maturation factor RimP (158 aa).

It belongs to the RimP family.

The protein localises to the cytoplasm. In terms of biological role, required for maturation of 30S ribosomal subunits. The chain is Ribosome maturation factor RimP from Leuconostoc mesenteroides subsp. mesenteroides (strain ATCC 8293 / DSM 20343 / BCRC 11652 / CCM 1803 / JCM 6124 / NCDO 523 / NBRC 100496 / NCIMB 8023 / NCTC 12954 / NRRL B-1118 / 37Y).